A 317-amino-acid polypeptide reads, in one-letter code: Adenine deaminase (317 aa).

Zn(2+) contacts are provided by His14, His16, and His194. Glu197 acts as the Proton donor in catalysis. Position 275 (Asp275) interacts with Zn(2+). Asp276 provides a ligand contact to substrate.

Belongs to the metallo-dependent hydrolases superfamily. Adenosine and AMP deaminases family. Adenine deaminase type 2 subfamily. Zn(2+) is required as a cofactor.

The enzyme catalyses adenine + H2O + H(+) = hypoxanthine + NH4(+). Catalyzes the hydrolytic deamination of adenine to hypoxanthine. Plays an important role in the purine salvage pathway and in nitrogen catabolism. The sequence is that of Adenine deaminase from Bordetella bronchiseptica (strain ATCC BAA-588 / NCTC 13252 / RB50) (Alcaligenes bronchisepticus).